Consider the following 824-residue polypeptide: Molybdenum cofactor sulfurase (824 aa).

The residue at position 274 (Lys-274) is an N6-(pyridoxal phosphate)lysine. The active site involves Cys-433. Residues 655–822 (CSSSKYRSCT…LQVGQQVYPS (168 aa)) enclose the MOSC domain.

This sequence belongs to the class-V pyridoxal-phosphate-dependent aminotransferase family. MOCOS subfamily. Pyridoxal 5'-phosphate serves as cofactor.

It carries out the reaction Mo-molybdopterin + L-cysteine + AH2 = thio-Mo-molybdopterin + L-alanine + A + H2O. The protein operates within cofactor biosynthesis; molybdopterin biosynthesis. In terms of biological role, sulfurates the molybdenum cofactor. Sulfation of molybdenum is essential for xanthine dehydrogenase (XDH) and aldehyde oxidase (ADO) enzymes in which molybdenum cofactor is liganded by 1 oxygen and 1 sulfur atom in active form. In Oryza sativa subsp. japonica (Rice), this protein is Molybdenum cofactor sulfurase (MCSU3).